A 99-amino-acid polypeptide reads, in one-letter code: Large ribosomal subunit protein eL30 (99 aa).

This sequence belongs to the eukaryotic ribosomal protein eL30 family.

In Pyrococcus horikoshii (strain ATCC 700860 / DSM 12428 / JCM 9974 / NBRC 100139 / OT-3), this protein is Large ribosomal subunit protein eL30 (rpl30e).